The following is a 547-amino-acid chain: Sensor histidine kinase CitA (547 aa).

Residues Met1 to Arg23 lie on the Cytoplasmic side of the membrane. The chain crosses the membrane as a helical span at residues Ile24–Thr44. The Periplasmic segment spans residues Asp45–Ser180. Residues Arg109, His112, Arg150, and Lys152 each contribute to the citrate site. The chain crosses the membrane as a helical span at residues Leu181–Ala201. At Arg202–Gly547 the chain is on the cytoplasmic side. The 40-residue stretch at Ile225–Glu264 folds into the PAS domain. A Histidine kinase domain is found at Ala347–Arg542. His350 is subject to Phosphohistidine; by autocatalysis.

Homodimer. In vitro CitB and the CitA kinase domain form a complex, formation of which is enhanced by ATP. Post-translationally, autophosphorylated.

Its subcellular location is the cell inner membrane. It carries out the reaction ATP + protein L-histidine = ADP + protein N-phospho-L-histidine.. In terms of biological role, member of the two-component regulatory system CitA/CitB. Probably activates CitB by phosphorylation. The periplasmic domain binds H-citrate(2-), which is essential for induction of the citrate-fermentation genes. This chain is Sensor histidine kinase CitA (citA), found in Klebsiella pneumoniae.